The sequence spans 399 residues: Nicotinate phosphoribosyltransferase (399 aa).

Residue H217 is modified to Phosphohistidine; by autocatalysis.

Belongs to the NAPRTase family. Transiently phosphorylated on a His residue during the reaction cycle. Phosphorylation strongly increases the affinity for substrates and increases the rate of nicotinate D-ribonucleotide production. Dephosphorylation regenerates the low-affinity form of the enzyme, leading to product release.

The catalysed reaction is nicotinate + 5-phospho-alpha-D-ribose 1-diphosphate + ATP + H2O = nicotinate beta-D-ribonucleotide + ADP + phosphate + diphosphate. The protein operates within cofactor biosynthesis; NAD(+) biosynthesis; nicotinate D-ribonucleotide from nicotinate: step 1/1. Functionally, catalyzes the synthesis of beta-nicotinate D-ribonucleotide from nicotinate and 5-phospho-D-ribose 1-phosphate at the expense of ATP. The polypeptide is Nicotinate phosphoribosyltransferase (Burkholderia ambifaria (strain MC40-6)).